The primary structure comprises 603 residues: 65-kDa microtubule-associated protein 7 (603 aa).

3 coiled-coil regions span residues 48–79 (KECL…EAEI), 131–186 (DIKA…EKSD), and 468–502 (RLVS…LLIK). A disordered region spans residues 501–559 (IKRRESIYGSKPSPRRSNSVRKTNGYNGDASVPPTPRRNSAGATNNDIMTTPRSYSSHR). Position 513 is a phosphoserine (Ser-513). Composition is skewed to polar residues over residues 515–526 (RRSNSVRKTNGY) and 537–559 (RRNS…SSHR). At Ser-599 the chain carries Phosphoserine.

Belongs to the MAP65/ASE1 family. Forms dimer. Binds to microtubules (MT).

Its subcellular location is the nucleus. It is found in the cytoplasm. The protein localises to the cytoskeleton. The protein resides in the spindle pole. In Arabidopsis thaliana (Mouse-ear cress), this protein is 65-kDa microtubule-associated protein 7 (MAP65-7).